A 162-amino-acid polypeptide reads, in one-letter code: Peptidyl-prolyl cis-trans isomerase (162 aa).

The region spanning 5–161 (FFDVIANGQP…ARIVIDKCGT (157 aa)) is the PPIase cyclophilin-type domain.

Belongs to the cyclophilin-type PPIase family. PPIase A subfamily.

It localises to the cytoplasm. The catalysed reaction is [protein]-peptidylproline (omega=180) = [protein]-peptidylproline (omega=0). With respect to regulation, binds cyclosporin A (CsA). CsA mediates some of its effects via an inhibitory action on PPIase. In terms of biological role, PPIases accelerate the folding of proteins. It catalyzes the cis-trans isomerization of proline imidic peptide bonds in oligopeptides. The protein is Peptidyl-prolyl cis-trans isomerase (ppi1) of Schizosaccharomyces pombe (strain 972 / ATCC 24843) (Fission yeast).